The sequence spans 366 residues: Ribosomal RNA large subunit methyltransferase M (366 aa).

S-adenosyl-L-methionine-binding positions include Ser188, 221–224, Asp240, Asp260, and Asp277; that span reads CPGG. Lys306 serves as the catalytic Proton acceptor.

This sequence belongs to the class I-like SAM-binding methyltransferase superfamily. RNA methyltransferase RlmE family. RlmM subfamily. Monomer.

The protein localises to the cytoplasm. It catalyses the reaction cytidine(2498) in 23S rRNA + S-adenosyl-L-methionine = 2'-O-methylcytidine(2498) in 23S rRNA + S-adenosyl-L-homocysteine + H(+). Functionally, catalyzes the 2'-O-methylation at nucleotide C2498 in 23S rRNA. The sequence is that of Ribosomal RNA large subunit methyltransferase M from Salmonella heidelberg (strain SL476).